Consider the following 352-residue polypeptide: Protein-glutamate methylesterase/protein-glutamine glutaminase (352 aa).

The region spanning 5–123 is the Response regulatory domain; sequence RILIVDDSVI…SKEKAIEYIR (119 aa). A 4-aspartylphosphate modification is found at Asp56. Residues 166 to 352 form the CheB-type methylesterase domain; sequence EIVAIGVSTG…LAEEIIRRIG (187 aa). Residues Ser173, His200, and Asp296 contribute to the active site.

Belongs to the CheB family. In terms of processing, phosphorylated by CheA. Phosphorylation of the N-terminal regulatory domain activates the methylesterase activity.

The protein resides in the cytoplasm. It catalyses the reaction [protein]-L-glutamate 5-O-methyl ester + H2O = L-glutamyl-[protein] + methanol + H(+). The enzyme catalyses L-glutaminyl-[protein] + H2O = L-glutamyl-[protein] + NH4(+). In terms of biological role, involved in chemotaxis. Part of a chemotaxis signal transduction system that modulates chemotaxis in response to various stimuli. Catalyzes the demethylation of specific methylglutamate residues introduced into the chemoreceptors (methyl-accepting chemotaxis proteins or MCP) by CheR. Also mediates the irreversible deamidation of specific glutamine residues to glutamic acid. This Trichodesmium erythraeum (strain IMS101) protein is Protein-glutamate methylesterase/protein-glutamine glutaminase.